The sequence spans 404 residues: Deoxyguanosinetriphosphate triphosphohydrolase-like protein (404 aa).

In terms of domain architecture, HD spans 69 to 217; that stretch reads RLTHSLEVAQ…AGIADDIAYD (149 aa).

It belongs to the dGTPase family. Type 2 subfamily.

The polypeptide is Deoxyguanosinetriphosphate triphosphohydrolase-like protein (Rhodopseudomonas palustris (strain BisB18)).